The chain runs to 483 residues: Glutamate mutase epsilon subunit (483 aa).

Arg66 contributes to the L-glutamate binding site. Gly68 provides a ligand contact to adenosylcob(III)alamin. Residue Arg100 participates in L-glutamate binding. An adenosylcob(III)alamin-binding site is contributed by Asn123. L-glutamate contacts are provided by residues 149 to 150 (RH), Glu171, and Tyr177. Position 180 (Pro180) interacts with adenosylcob(III)alamin. Tyr181 contacts L-glutamate. Residues Phe297, Lys326, Glu330, and Ile334 each coordinate adenosylcob(III)alamin.

The protein belongs to the methylaspartate mutase GlmE subunit family. Heterotetramer composed of 2 epsilon subunits (GlmE) and 2 sigma subunits (GlmS). GlmE exists as a homodimer and GlmS as a monomer. Requires adenosylcob(III)alamin as cofactor.

The catalysed reaction is (2S,3S)-3-methyl-L-aspartate = L-glutamate. It participates in amino-acid degradation; L-glutamate degradation via mesaconate pathway; acetate and pyruvate from L-glutamate: step 1/4. Its activity is regulated as follows. Competitively inhibited by (2S,4S)-4-fluoroglutamate, 2-methyleneglutarate, (2R,3RS)-3-fluoroglutamate and (S)-3-methylitaconate. Its function is as follows. Catalyzes the carbon skeleton rearrangement of L-glutamate to L-threo-3-methylaspartate ((2S,3S)-3-methylaspartate). The sequence is that of Glutamate mutase epsilon subunit from Clostridium cochlearium.